Here is a 354-residue protein sequence, read N- to C-terminus: MSELKNDRYLRALAKQPVDVTPVWMMRQAGRYLPEYRATRAQAGDFMSLCRNAELACEVTLQPLRRYPLDAAILFSDILTIPDAMGLGLYFETGEGPKFERPISSLSDVKKIPKLDPNDDLGYVMNAVSTIRRELKGEVPLIGFSGSPWTLATYMVEGGSSKVFGKIKKMAFAEPQTLHLLLDKLADSVIDYLNAQIKAGAQSLMVFDSWGGVLSPRDYNEFSLQYMHKIVDGLIREYDGRRVPVTLFTKNGGQWIEAIAATGCDAIGLDWTINISDAKRRVGDKVALQGNMDPSMLHGTPERIRQEVATILEDFGTGNGHVFNLGHGITPDVDPENAGVFINAVHEFSAKYHK.

Substrate-binding positions include Arg27–Arg31, Asp77, Tyr154, Ser209, and His327.

Belongs to the uroporphyrinogen decarboxylase family. Homodimer.

Its subcellular location is the cytoplasm. It catalyses the reaction uroporphyrinogen III + 4 H(+) = coproporphyrinogen III + 4 CO2. It functions in the pathway porphyrin-containing compound metabolism; protoporphyrin-IX biosynthesis; coproporphyrinogen-III from 5-aminolevulinate: step 4/4. In terms of biological role, catalyzes the decarboxylation of four acetate groups of uroporphyrinogen-III to yield coproporphyrinogen-III. This is Uroporphyrinogen decarboxylase from Pseudoalteromonas translucida (strain TAC 125).